We begin with the raw amino-acid sequence, 1066 residues long: Protein sts5 (1066 aa).

Positions Gln18–Pro28 are enriched in low complexity. 3 disordered regions span residues Gln18–Thr40, Ala154–Ser178, and Ser247–Leu286. Over residues Thr29–Thr40 the composition is skewed to polar residues. Thr157 is modified (phosphothreonine). The segment covering His168–Ser178 has biased composition (low complexity). Thr262 is subject to Phosphothreonine. Ser264 bears the Phosphoserine mark. A compositionally biased stretch (gly residues) spans Ser270–Gly280. Position 377 is a phosphothreonine (Thr377). Residues Ser454 to Lys480 form a disordered region. The span at Ser464–Asn476 shows a compositional bias: low complexity. The 75-residue stretch at Val482–Thr556 folds into the CSD2 domain. The RNB domain maps to Asn618 to Arg934. The region spanning Gln983–Ser1033 is the DIS3L2 C-terminal domain.

The protein belongs to the RNR ribonuclease family. As to quaternary structure, interacts with serine/threonine phosphatase ppe1, protein kinase C and an osmosensing MAP kinase.

Its subcellular location is the cytoplasm. Required for the maintenance of cell shape during interphase. Required for localization of cortical actin to the growing tips before mitosis. This is Protein sts5 (sts5) from Schizosaccharomyces pombe (strain 972 / ATCC 24843) (Fission yeast).